The sequence spans 521 residues: Apolipoprotein N-acyltransferase (521 aa).

Transmembrane regions (helical) follow at residues 34–54, 64–84, 100–120, 137–157, 176–196, and 206–226; these read LAAPPTGWGVLVWVALVPLLV, AFWLGTLAGMVYYAILLRWLL, LAIALGAWLFVSASQAWVIGL, LFAVGLWVGLHWLWGQGETAF, VALGGAQLLVGLAVAVNALVA, and YAGLAALLAASVYLYGWWQLA. The CN hydrolase domain occupies 240 to 480; it reads IQGNIAQARK…YAAFVEPVRL (241 aa). Glu-281 serves as the catalytic Proton acceptor. Lys-341 is a catalytic residue. Cys-392 serves as the catalytic Nucleophile. Residues 488-508 traverse the membrane as a helical segment; that stretch reads ALWGDWFVPLSAALALLGLIA.

Belongs to the CN hydrolase family. Apolipoprotein N-acyltransferase subfamily.

The protein localises to the cell inner membrane. The enzyme catalyses N-terminal S-1,2-diacyl-sn-glyceryl-L-cysteinyl-[lipoprotein] + a glycerophospholipid = N-acyl-S-1,2-diacyl-sn-glyceryl-L-cysteinyl-[lipoprotein] + a 2-acyl-sn-glycero-3-phospholipid + H(+). Its pathway is protein modification; lipoprotein biosynthesis (N-acyl transfer). Catalyzes the phospholipid dependent N-acylation of the N-terminal cysteine of apolipoprotein, the last step in lipoprotein maturation. In Gloeobacter violaceus (strain ATCC 29082 / PCC 7421), this protein is Apolipoprotein N-acyltransferase.